A 178-amino-acid polypeptide reads, in one-letter code: Large ribosomal subunit protein uL5 (178 aa).

It belongs to the universal ribosomal protein uL5 family. As to quaternary structure, part of the 50S ribosomal subunit; part of the 5S rRNA/L5/L18/L25 subcomplex. Contacts the 5S rRNA and the P site tRNA. Forms a bridge to the 30S subunit in the 70S ribosome.

Functionally, this is one of the proteins that bind and probably mediate the attachment of the 5S RNA into the large ribosomal subunit, where it forms part of the central protuberance. In the 70S ribosome it contacts protein S13 of the 30S subunit (bridge B1b), connecting the 2 subunits; this bridge is implicated in subunit movement. Contacts the P site tRNA; the 5S rRNA and some of its associated proteins might help stabilize positioning of ribosome-bound tRNAs. The chain is Large ribosomal subunit protein uL5 from Wolbachia pipientis subsp. Culex pipiens (strain wPip).